The primary structure comprises 238 residues: Uridylate kinase (238 aa).

12-15 (KLSG) provides a ligand contact to ATP. Glycine 54 lines the UMP pocket. ATP is bound by residues glycine 55 and arginine 59. UMP contacts are provided by residues aspartate 74 and 135-142 (TGNPYFTT). The ATP site is built by threonine 162, asparagine 163, tyrosine 168, and aspartate 171.

The protein belongs to the UMP kinase family. Homohexamer.

Its subcellular location is the cytoplasm. The catalysed reaction is UMP + ATP = UDP + ADP. It participates in pyrimidine metabolism; CTP biosynthesis via de novo pathway; UDP from UMP (UMPK route): step 1/1. Its activity is regulated as follows. Inhibited by UTP. In terms of biological role, catalyzes the reversible phosphorylation of UMP to UDP. This is Uridylate kinase from Nitrobacter hamburgensis (strain DSM 10229 / NCIMB 13809 / X14).